The sequence spans 268 residues: MFSTKQVVLSSLLFISSIYTSNVNGKNLSVFGAFFGSPNDNDNAREHCCSPRNKFHLTSFSSGCDLQKEVECLRAECKKSKECCNVVSLCSGLSECEYVEKTCDAIKQYYQKQAINTDVKITLVLKWIYKCMNTTSRAKLAVFTAHAIFNTSAFACLEAEGTWKYRSRGLLAIQGEKNYGLLTSYSRNRENFKECPHRLADLNCDVISVTVDWWYRNVGKCCKDYFGSLEILKPTEWTALKKNCADRESARRLENRRRLYEILVRCYE.

Residues 1–25 form the signal peptide; it reads MFSTKQVVLSSLLFISSIYTSNVNG. A glycan (N-linked (GlcNAc...) asparagine) is linked at N27. The HBM signature appears at 77–82; the sequence is CKKSKE. 2 N-linked (GlcNAc...) asparagine glycosylation sites follow: N133 and N150.

It localises to the spore wall. This Nosema bombycis (strain CQ1 / CVCC 102059) (Microsporidian parasite) protein is Spore wall protein 25 (SWP25).